We begin with the raw amino-acid sequence, 404 residues long: Protein ARK2N (404 aa).

Basic and acidic residues-rich tracts occupy residues 1-12 (MKMEEAVGKVEE) and 23-32 (SEQETAKEED). Disordered regions lie at residues 1-50 (MKME…ADST) and 63-255 (RRDS…TNSD). The residue at position 66 (serine 66) is a Phosphoserine. Residue serine 67 is modified to Phosphoserine; by AMPK. Residues 87–121 (SDSSNHCMLSPSSSGHLADSDTLSSAEENEPSQAE) are compositionally biased toward polar residues. Phosphoserine is present on residues serine 143, serine 145, and serine 147. Residues 169–187 (AKVKGHRSQKHKERIRLLR) show a composition bias toward basic residues. The stretch at 175 to 200 (RSQKHKERIRLLRQKREAAARKKYNL) forms a coiled coil. The segment at 202 to 226 (QDSSTSDSDLTCDSSTSSSDDDEEV) is required for interaction with CSNK2B. The segment covering 203 to 219 (DSSTSDSDLTCDSSTSS) has biased composition (low complexity). Serine 327, serine 328, and serine 330 each carry phosphoserine. At arginine 347 the chain carries Omega-N-methylarginine. Residue lysine 358 forms a Glycyl lysine isopeptide (Lys-Gly) (interchain with G-Cter in SUMO2) linkage.

Interacts with CSNK2B (via KSSR). Interacts with JUN; the interaction is mediated by CSNK2B. Phosphorylated at Ser-67 by AMPK. In skeletal muscle, phosphorylation is induced by exercise and seems to increase muscle contractile function. Expressed in skeletal muscle.

It localises to the nucleus. In terms of biological role, AMPK substrate important for exercise capacity and skeletal muscle function. Required for normal contraction-induced signaling. (Microbial infection) Upon Epstein-Barr virus (EBV) infection, suppresses viral BZLF1 expression and subsequent EBV reactivation by interacting with JUN and inhibiting its transcriptional activator activity on BZLF1 Z promoter. This Homo sapiens (Human) protein is Protein ARK2N.